A 529-amino-acid polypeptide reads, in one-letter code: MDSQFLSVSRPQLDVSAWTPQKWFVQGALRSFEEWSAWQYIVTLLIAIITYDQVMYIWRKASIAGPAFKIPLMGPFLQALHPRFESYLEQWASGPLSCVSIFHKFVVLASDRDLAHKVFKSPTYAEPCIVPIAKDILGHKAWVFLQGKAHAEYRRGLTPLFTNKAMETYLPAQERVCADYFDKFVAASAANNGQPREFMTLFREINCALSLRTFFGDYISQDAVKKIADDFYLATAALELVNVPLSMYIPGTKPWRGKRTADAVHAEFARCAAACKANMATGSEPTCIVDHWVLHMMESSRYHARVAAGEEGVEKPTNVIREFSNQEISETLFTFLFASQDASSSATTWLFQILAQRPDVLSRLREENLAARNGDRFKPFDLPMLESLPYTTAVIKELLRHRPPVIFVPYLATKPFPITPSYTVPKNSMIIPSCYPALHDPEAYPNPEVFDPDRWITGDAEKQTKNWLVFGAGPHDCLARRYVPLSMAGMIGKAALELDWVHHPTERSEEIRVFATLFPMDGCQLVFSK.

Residues 38–58 (WQYIVTLLIAIITYDQVMYIW) form a helical membrane-spanning segment. C477 provides a ligand contact to heme.

This sequence belongs to the cytochrome P450 family. It depends on heme as a cofactor.

The protein resides in the membrane. It participates in secondary metabolite biosynthesis; terpenoid biosynthesis. In terms of biological role, cytochrome P450 monooxygenase; part of the gene cluster that mediates the biosynthesis of the sesterterpenes ophiobolins, fungal phytotoxins with potential anti-cancer activities. The first step of the pathway is performed by the sesterterpene synthase oblA that possesses both prenyl transferase and terpene cyclase activity, converting isopentenyl diphosphate and dimethylallyl diphosphate into geranylfarnesyl diphosphate (GFPP) and further converting GFPP into ophiobolin F, respectively. Other sesterterpenoids (C(25) terpenoids) are found as minor products of oblA. The cytochrome P450 monooxygenase oblB then catalyzes a four-step oxidative transformation of ophiobolin F to yield ophiobolin C. The function of the cytochrome P450 monooxygenase oblE has still to be determined. This chain is Cytochrome P450 monooxygenase oblE, found in Emericella variicolor (Aspergillus stellatus).